A 134-amino-acid chain; its full sequence is Transcription factor atoh7 (134 aa).

The disordered stretch occupies residues 1–27 (MKPRRPSCADSGSDSDSRDPEKFESAM). Residues 15–27 (SDSRDPEKFESAM) show a composition bias toward basic and acidic residues. The bHLH domain occupies 28 to 80 (RRRMAANARERKRMQGLNTAFDRLRKVVPQWGQDKKLSKYETLQMALSYIMAL).

It is found in the nucleus. The protein localises to the perikaryon. It localises to the cell projection. Its subcellular location is the axon. Transcription factor that binds to DNA at the consensus sequence 5'-CAG[GC]TG-3'. Involved in the differentiation of retinal ganglion cells, photoreceptor population and optic nerve development. Required for retinal circadian rhythm photoentrainment. This Danio rerio (Zebrafish) protein is Transcription factor atoh7.